Reading from the N-terminus, the 229-residue chain is Peptidyl-prolyl cis-trans isomerase FKBP17-1, chloroplastic (229 aa).

The N-terminal 63 residues, 1 to 63, are a transit peptide targeting the chloroplast; sequence MIRCFAWTPL…SISLSIIAVT (63 aa). The PPIase FKBP-type domain maps to 105–225; sequence GDQIEIHYYG…VFDIELVSTR (121 aa).

The protein belongs to the FKBP-type PPIase family.

The protein localises to the plastid. The protein resides in the chloroplast thylakoid lumen. The enzyme catalyses [protein]-peptidylproline (omega=180) = [protein]-peptidylproline (omega=0). Functionally, PPIases accelerate the folding of proteins. It catalyzes the cis-trans isomerization of proline imidic peptide bonds in oligopeptides. The protein is Peptidyl-prolyl cis-trans isomerase FKBP17-1, chloroplastic (FKBP17-1) of Arabidopsis thaliana (Mouse-ear cress).